A 132-amino-acid chain; its full sequence is Keratin, high-sulfur matrix protein, IIIA3 (132 aa).

Functionally, the keratin products of mammalian epidermal derivatives such as wool and hair consist of microfibrils embedded in a rigid matrix of other proteins. The matrix proteins include the high-sulfur and high-tyrosine keratins, having molecular weights of 6-20 kDa, whereas the microfibrils contain the larger, low-sulfur keratins (40-56 kDa). This Capra hircus (Goat) protein is Keratin, high-sulfur matrix protein, IIIA3.